The following is a 124-amino-acid chain: MPRLKTRREKRLRRHKRIRKKVFGTPERPRLCVYRSLNHFYAQIIDDTIGHTLVSASTLDPEFEKITGKRGGKSIKDAEVVAEIIARRALEKGIKKVVFDRGGFKYHGKIKAFADKCREMGLEF.

Belongs to the universal ribosomal protein uL18 family. As to quaternary structure, part of the 50S ribosomal subunit; part of the 5S rRNA/L5/L18/L25 subcomplex. Contacts the 5S and 23S rRNAs.

In terms of biological role, this is one of the proteins that bind and probably mediate the attachment of the 5S RNA into the large ribosomal subunit, where it forms part of the central protuberance. The protein is Large ribosomal subunit protein uL18 of Aquifex pyrophilus.